The following is a 150-amino-acid chain: Globin-2 (150 aa).

Residues 11–150 (PLSDAEKNKI…MICILLSSAY (140 aa)) form the Globin domain. Residues H74 and H106 each coordinate heme b.

Belongs to the globin family. As to quaternary structure, monomer.

This Mordacia mordax (Southern hemisphere lamprey) protein is Globin-2.